The primary structure comprises 93 residues: Neurophysin 1 (93 aa).

7 cysteine pairs are disulfide-bonded: Cys10–Cys54, Cys13–Cys27, Cys21–Cys44, Cys28–Cys34, Cys61–Cys74, Cys68–Cys86, and Cys75–Cys80.

It belongs to the vasopressin/oxytocin family.

In terms of biological role, neurophysin 1 specifically binds oxytocin. The sequence is that of Neurophysin 1 from Struthio camelus (Common ostrich).